Reading from the N-terminus, the 367-residue chain is UDP-N-acetylglucosamine--N-acetylmuramyl-(pentapeptide) pyrophosphoryl-undecaprenol N-acetylglucosamine transferase (367 aa).

Residues threonine 15 to glycine 17, asparagine 127, arginine 163, serine 191, isoleucine 249, and glutamine 294 each bind UDP-N-acetyl-alpha-D-glucosamine.

The protein belongs to the glycosyltransferase 28 family. MurG subfamily.

It is found in the cell inner membrane. It carries out the reaction di-trans,octa-cis-undecaprenyl diphospho-N-acetyl-alpha-D-muramoyl-L-alanyl-D-glutamyl-meso-2,6-diaminopimeloyl-D-alanyl-D-alanine + UDP-N-acetyl-alpha-D-glucosamine = di-trans,octa-cis-undecaprenyl diphospho-[N-acetyl-alpha-D-glucosaminyl-(1-&gt;4)]-N-acetyl-alpha-D-muramoyl-L-alanyl-D-glutamyl-meso-2,6-diaminopimeloyl-D-alanyl-D-alanine + UDP + H(+). Its pathway is cell wall biogenesis; peptidoglycan biosynthesis. Its function is as follows. Cell wall formation. Catalyzes the transfer of a GlcNAc subunit on undecaprenyl-pyrophosphoryl-MurNAc-pentapeptide (lipid intermediate I) to form undecaprenyl-pyrophosphoryl-MurNAc-(pentapeptide)GlcNAc (lipid intermediate II). The polypeptide is UDP-N-acetylglucosamine--N-acetylmuramyl-(pentapeptide) pyrophosphoryl-undecaprenol N-acetylglucosamine transferase (Burkholderia vietnamiensis (strain G4 / LMG 22486) (Burkholderia cepacia (strain R1808))).